A 1057-amino-acid chain; its full sequence is Structural maintenance of chromosomes protein 6B (1057 aa).

Positions 22-1047 (ILRIKVENFM…ISMVKSHERI (1026 aa)) constitute a Zinc-hook domain. 49–56 (GQNGSGKS) provides a ligand contact to ATP. Residues 135 to 448 (KVSNKRDELR…NDLKKHQTNK (314 aa)) are a coiled coil. The tract at residues 449-632 (VTAFGGDRVI…PPLSRRPSRL (184 aa)) is flexible hinge. A coiled-coil region spans residues 633–904 (CASFDDQIKD…QDHREKLMAC (272 aa)). Over residues 818–828 (KNKRKESDQKA) the composition is skewed to basic and acidic residues. Residues 818-845 (KNKRKESDQKASEICPESEIESLGPWDG) are disordered.

It belongs to the SMC family. SMC6 subfamily. As to quaternary structure, forms a heterodimer with SMC5. The SMC5-SMC6 complex is composed of the SMC5 and SMC6 heterodimer attached via their hinge domain and from the non-SMC subunit NSE4A or NSE4B. As to expression, expressed in seedlings, rosette leaves and floral buds.

The protein resides in the nucleus. Its subcellular location is the chromosome. Functionally, core component of the SMC5-SMC6 complex that promotes sister chromatid alignment after DNA damage and facilitates double-stranded DNA breaks (DSBs) repair via homologous recombination between sister chromatids. The polypeptide is Structural maintenance of chromosomes protein 6B (SMC6B) (Arabidopsis thaliana (Mouse-ear cress)).